The chain runs to 314 residues: Tetraacyldisaccharide 4'-kinase (314 aa).

Position 54-61 (54-61 (YIGGTGKT)) interacts with ATP.

It belongs to the LpxK family.

The enzyme catalyses a lipid A disaccharide + ATP = a lipid IVA + ADP + H(+). It functions in the pathway glycolipid biosynthesis; lipid IV(A) biosynthesis; lipid IV(A) from (3R)-3-hydroxytetradecanoyl-[acyl-carrier-protein] and UDP-N-acetyl-alpha-D-glucosamine: step 6/6. Transfers the gamma-phosphate of ATP to the 4'-position of a tetraacyldisaccharide 1-phosphate intermediate (termed DS-1-P) to form tetraacyldisaccharide 1,4'-bis-phosphate (lipid IVA). The chain is Tetraacyldisaccharide 4'-kinase from Pelagibacter ubique (strain HTCC1062).